The sequence spans 258 residues: Ureidoacrylate amidohydrolase RutB (258 aa).

The tract at residues 1-23 (MDRPTTYPMDQPAGFRDAQGRHG) is disordered. D47 (proton acceptor) is an active-site residue. The active site involves K156. Residue C189 is the Nucleophile of the active site.

The protein belongs to the isochorismatase family. RutB subfamily.

The enzyme catalyses (Z)-3-ureidoacrylate + H2O + H(+) = (Z)-3-aminoacrylate + NH4(+) + CO2. It carries out the reaction (Z)-3-ureidoacrylate + H2O = (Z)-3-aminoacrylate + carbamate + H(+). The catalysed reaction is (Z)-2-methylureidoacrylate + H2O + H(+) = (Z)-2-methylaminoacrylate + NH4(+) + CO2. Its function is as follows. Hydrolyzes ureidoacrylate to form aminoacrylate and carbamate. The carbamate hydrolyzes spontaneously, thereby releasing one of the nitrogen atoms of the pyrimidine ring as ammonia and one of its carbon atoms as CO2. The protein is Ureidoacrylate amidohydrolase RutB of Methylobacterium radiotolerans (strain ATCC 27329 / DSM 1819 / JCM 2831 / NBRC 15690 / NCIMB 10815 / 0-1).